Reading from the N-terminus, the 179-residue chain is Oryzines biosynthesis cluster protein J (179 aa).

One can recognise a Cupin type-2 domain in the interval 88-148 (YVDYHPGCEP…NHCWRNPSKT (61 aa)).

It belongs to the oryJ family.

The protein operates within secondary metabolite biosynthesis. Its function is as follows. Part of the gene cluster that mediates the biosynthesis of oryzines, natural products with an unusual maleidride backbone. The two subunits of the fungal fatty acid synthase oryfasA and oryfasB probably form octenoic acid. This fatty acid is most likely activated by the acyl-CoA ligase oryP to give octenyl-CoA before the citrate synthase-like protein oryE catalyzes condensation with oxaloacetate to form tricarboxylic acid. The next steps of the pathways are conjectural, but a favorite possible route has been proposed, beginning with decarboxylation and concomitant dehydration by the decarboxylase oryM, followed by tautomerization, which may lead to the production of a diene intermediate. Reduction of this diene intermediate could give the known metabolite piliformic acid. On the pathway to oryzine B and oryzine A, however, hydroxylation of the diene by the alpha-ketoglutarate-dependent dioxygenase oryG and lactonisation by the lactonohydrolases oryH or oryL could give oryzine B directly. Finally, enoyl reduction by the dehydrogenase oryD would then convert oryzine B into oryzine A. This chain is Oryzines biosynthesis cluster protein J, found in Aspergillus oryzae (strain ATCC 42149 / RIB 40) (Yellow koji mold).